The chain runs to 147 residues: Small ribosomal subunit protein bS18 (147 aa).

The protein belongs to the bacterial ribosomal protein bS18 family. Part of the 30S ribosomal subunit. Forms a tight heterodimer with protein bS6.

In terms of biological role, binds as a heterodimer with protein bS6 to the central domain of the 16S rRNA, where it helps stabilize the platform of the 30S subunit. The chain is Small ribosomal subunit protein bS18 from Dehalococcoides mccartyi (strain ATCC BAA-2100 / JCM 16839 / KCTC 5957 / BAV1).